Consider the following 375-residue polypeptide: Succinyl-diaminopimelate desuccinylase (375 aa).

H66 contributes to the Zn(2+) binding site. D68 is an active-site residue. D99 is a binding site for Zn(2+). Residue E133 is the Proton acceptor of the active site. E134, E162, and H348 together coordinate Zn(2+).

The protein belongs to the peptidase M20A family. DapE subfamily. Homodimer. Requires Zn(2+) as cofactor. Co(2+) serves as cofactor.

The enzyme catalyses N-succinyl-(2S,6S)-2,6-diaminopimelate + H2O = (2S,6S)-2,6-diaminopimelate + succinate. It functions in the pathway amino-acid biosynthesis; L-lysine biosynthesis via DAP pathway; LL-2,6-diaminopimelate from (S)-tetrahydrodipicolinate (succinylase route): step 3/3. Its function is as follows. Catalyzes the hydrolysis of N-succinyl-L,L-diaminopimelic acid (SDAP), forming succinate and LL-2,6-diaminopimelate (DAP), an intermediate involved in the bacterial biosynthesis of lysine and meso-diaminopimelic acid, an essential component of bacterial cell walls. This Escherichia coli O1:K1 / APEC protein is Succinyl-diaminopimelate desuccinylase.